Reading from the N-terminus, the 185-residue chain is Riboflavin kinase (185 aa).

The Mg(2+) site is built by threonine 41 and asparagine 43. Residue glutamate 122 is the Nucleophile of the active site.

This sequence belongs to the flavokinase family. Zn(2+) serves as cofactor. It depends on Mg(2+) as a cofactor.

The catalysed reaction is riboflavin + ATP = FMN + ADP + H(+). Its pathway is cofactor biosynthesis; FMN biosynthesis; FMN from riboflavin (ATP route): step 1/1. In terms of biological role, catalyzes the phosphorylation of riboflavin (vitamin B2) to form flavin mononucleotide (FMN) coenzyme. This Kluyveromyces lactis (strain ATCC 8585 / CBS 2359 / DSM 70799 / NBRC 1267 / NRRL Y-1140 / WM37) (Yeast) protein is Riboflavin kinase (FMN1).